Here is a 184-residue protein sequence, read N- to C-terminus: Autophagy-related protein 101 (184 aa).

Belongs to the ATG101 family. As to quaternary structure, component of the atg1 kinase complex composed of at least atg1, atg13, atg17 and atg101. Interacts directly with atg13.

Its subcellular location is the cytoplasm. It is found in the nucleus. The protein localises to the preautophagosomal structure membrane. Functionally, autophagy factor required for autophagosome formation. Component of the atg1 kinase complex in which it stabilizes atg13. Is also responsible for recruiting downstream factors to the autophagosome-formation site. Has a role in meiosis and sporulation. The protein is Autophagy-related protein 101 of Schizosaccharomyces pombe (strain 972 / ATCC 24843) (Fission yeast).